The following is a 333-amino-acid chain: DNA-directed RNA polymerase subunit alpha (333 aa).

Residues 1 to 246 (MKKMVQIKYK…AHLQVIGDVK (246 aa)) are alpha N-terminal domain (alpha-NTD). Residues 262 to 333 (VEPSIHSVDI…YNVTLNRGEK (72 aa)) form an alpha C-terminal domain (alpha-CTD) region.

The protein belongs to the RNA polymerase alpha chain family. In terms of assembly, homodimer. The RNAP catalytic core consists of 2 alpha, 1 beta, 1 beta' and 1 omega subunit. When a sigma factor is associated with the core the holoenzyme is formed, which can initiate transcription.

It carries out the reaction RNA(n) + a ribonucleoside 5'-triphosphate = RNA(n+1) + diphosphate. In terms of biological role, DNA-dependent RNA polymerase catalyzes the transcription of DNA into RNA using the four ribonucleoside triphosphates as substrates. The protein is DNA-directed RNA polymerase subunit alpha of Mycoplasmopsis pulmonis (strain UAB CTIP) (Mycoplasma pulmonis).